The primary structure comprises 153 residues: Putative pre-16S rRNA nuclease (153 aa).

The protein belongs to the YqgF nuclease family.

Its subcellular location is the cytoplasm. Its function is as follows. Could be a nuclease involved in processing of the 5'-end of pre-16S rRNA. This is Putative pre-16S rRNA nuclease from Koribacter versatilis (strain Ellin345).